Consider the following 757-residue polypeptide: Polyribonucleotide nucleotidyltransferase (757 aa).

Mg(2+)-binding residues include Asp482 and Asp488. One can recognise a KH domain in the interval 549–608; it reads PRMLSFYIDKDKISAAIGSKGKNIRSVCERSNAKIEIGDDGKVSVFATSGTEAEIAKSMM. Positions 618-686 constitute an S1 motif domain; it reads GSIVDVKVVR…KGGCPKLSRR (69 aa). The span at 703-714 shows a compositional bias: basic and acidic residues; it reads EERKDGPNDRDN. The tract at residues 703-757 is disordered; it reads EERKDGPNDRDNYYNNSFSRKPGGSHHKRPPRPRSGFSNRNRPKFGNNDSSSGFY. Residues 725 to 734 show a composition bias toward basic residues; the sequence is GGSHHKRPPR.

Belongs to the polyribonucleotide nucleotidyltransferase family. The cofactor is Mg(2+).

It localises to the cytoplasm. It catalyses the reaction RNA(n+1) + phosphate = RNA(n) + a ribonucleoside 5'-diphosphate. Functionally, involved in mRNA degradation. Catalyzes the phosphorolysis of single-stranded polyribonucleotides processively in the 3'- to 5'-direction. In Wolbachia sp. subsp. Drosophila simulans (strain wRi), this protein is Polyribonucleotide nucleotidyltransferase.